Reading from the N-terminus, the 140-residue chain is Putative transmembrane protein 49 (140 aa).

2 helical membrane passes run 23-43 (LIMS…IGGV) and 93-110 (IAVH…RYMY).

It is found in the host membrane. The sequence is that of Putative transmembrane protein 49 (SIFV0049) from Saccharolobus islandicus (Sulfolobus islandicus).